An 89-amino-acid chain; its full sequence is Small ribosomal subunit protein uS15 (89 aa).

It belongs to the universal ribosomal protein uS15 family. In terms of assembly, part of the 30S ribosomal subunit. Forms a bridge to the 50S subunit in the 70S ribosome, contacting the 23S rRNA.

One of the primary rRNA binding proteins, it binds directly to 16S rRNA where it helps nucleate assembly of the platform of the 30S subunit by binding and bridging several RNA helices of the 16S rRNA. In terms of biological role, forms an intersubunit bridge (bridge B4) with the 23S rRNA of the 50S subunit in the ribosome. This Streptococcus pneumoniae (strain P1031) protein is Small ribosomal subunit protein uS15.